Reading from the N-terminus, the 334-residue chain is Ornithine carbamoyltransferase (334 aa).

Residues 57-60 (STRT), Q84, R108, and 135-138 (HPTQ) each bind carbamoyl phosphate. Residues N169, D233, and 237–238 (SM) contribute to the L-ornithine site. Residues 275 to 276 (CL) and R320 contribute to the carbamoyl phosphate site.

The protein belongs to the aspartate/ornithine carbamoyltransferase superfamily. OTCase family. In terms of assembly, homotrimer.

It is found in the cytoplasm. The catalysed reaction is carbamoyl phosphate + L-ornithine = L-citrulline + phosphate + H(+). It participates in amino-acid biosynthesis; L-arginine biosynthesis; L-arginine from L-ornithine and carbamoyl phosphate: step 1/3. Functionally, reversibly catalyzes the transfer of the carbamoyl group from carbamoyl phosphate (CP) to the N(epsilon) atom of ornithine (ORN) to produce L-citrulline. This is Ornithine carbamoyltransferase from Vibrio vulnificus (strain CMCP6).